Consider the following 193-residue polypeptide: Xanthine phosphoribosyltransferase (193 aa).

Leu-20 and Asn-27 together coordinate xanthine. Position 128 to 132 (Ala-128 to Ala-132) interacts with 5-phospho-alpha-D-ribose 1-diphosphate. Lys-156 contacts xanthine.

The protein belongs to the purine/pyrimidine phosphoribosyltransferase family. Xpt subfamily. Homodimer.

It localises to the cytoplasm. The enzyme catalyses XMP + diphosphate = xanthine + 5-phospho-alpha-D-ribose 1-diphosphate. It functions in the pathway purine metabolism; XMP biosynthesis via salvage pathway; XMP from xanthine: step 1/1. In terms of biological role, converts the preformed base xanthine, a product of nucleic acid breakdown, to xanthosine 5'-monophosphate (XMP), so it can be reused for RNA or DNA synthesis. The chain is Xanthine phosphoribosyltransferase from Exiguobacterium sp. (strain ATCC BAA-1283 / AT1b).